We begin with the raw amino-acid sequence, 185 residues long: Gastrokine-1 (185 aa).

An N-terminal signal peptide occupies residues 1 to 20 (MKFTIVFAGLLGVFLAPALA). A BRICHOS domain is found at 54–150 (NNGWDSWNSI…MCRGIPTYMA (97 aa)). A disulfide bond links cysteine 81 and cysteine 142.

This sequence belongs to the gastrokine family. In terms of tissue distribution, expressed in stomach (at protein level). No expression is detected in cancer tissue or gastric cancer cell lines.

The protein resides in the secreted. Its subcellular location is the cytoplasmic granule. The protein localises to the golgi apparatus. In terms of biological role, has mitogenic activity and may be involved in maintaining the integrity of the gastric mucosal epithelium. In Homo sapiens (Human), this protein is Gastrokine-1 (GKN1).